The chain runs to 635 residues: Chaperone protein HtpG (635 aa).

The a; substrate-binding stretch occupies residues 1–336; sequence MTTAEAAAPE…SADLPLNLSR (336 aa). Residues 337 to 556 form a b region; it reads EMLQDSAILA…ESGIDRRLEK (220 aa). The tract at residues 557–635 is c; that stretch reads LLASAGRLGD…RVMQRGLPTA (79 aa).

The protein belongs to the heat shock protein 90 family. As to quaternary structure, homodimer.

It localises to the cytoplasm. Functionally, molecular chaperone. Has ATPase activity. The polypeptide is Chaperone protein HtpG (Azorhizobium caulinodans (strain ATCC 43989 / DSM 5975 / JCM 20966 / LMG 6465 / NBRC 14845 / NCIMB 13405 / ORS 571)).